We begin with the raw amino-acid sequence, 504 residues long: Anaerobic nitric oxide reductase transcription regulator NorR (504 aa).

Aspartate 57 bears the 4-aspartylphosphate mark. In terms of domain architecture, Sigma-54 factor interaction spans methionine 187–valine 416. ATP-binding positions include glycine 215–glutamate 222 and alanine 278–glutamate 287. Residues tryptophan 479 to lysine 498 constitute a DNA-binding region (H-T-H motif).

Its pathway is nitrogen metabolism; nitric oxide reduction. Its function is as follows. Required for the expression of anaerobic nitric oxide (NO) reductase, acts as a transcriptional activator for at least the norVW operon. Activation also requires sigma-54. This is Anaerobic nitric oxide reductase transcription regulator NorR from Escherichia coli (strain K12 / MC4100 / BW2952).